A 368-amino-acid polypeptide reads, in one-letter code: WAT1-related protein At5g40240 (368 aa).

The next 10 membrane-spanning stretches (helical) occupy residues 18 to 38 (VVPF…NTLF), 50 to 70 (VFVF…SVIF), 82 to 102 (PLFF…IAGC), 111 to 131 (TLAS…AVIF), 142 to 162 (ATQA…VVVL), 194 to 214 (WIIG…WYIL), 226 to 246 (ITVV…VCLF), 260 to 280 (ISLA…ALTH), 292 to 312 (ISLF…IFLG), and 315 to 335 (LHLG…TVIW). 2 consecutive EamA domains span residues 33 to 161 (GSNT…LVVV) and 208 to 334 (ISVW…YTVI).

It belongs to the drug/metabolite transporter (DMT) superfamily. Plant drug/metabolite exporter (P-DME) (TC 2.A.7.4) family.

The protein localises to the membrane. This chain is WAT1-related protein At5g40240, found in Arabidopsis thaliana (Mouse-ear cress).